A 66-amino-acid chain; its full sequence is Sodium/potassium-transporting ATPase subunit gamma (66 aa).

A helical membrane pass occupies residues 29 to 46 (GGLIFAGLAFIVGLLILL).

It belongs to the FXYD family. In terms of assembly, regulatory subunit of the sodium/potassium-transporting ATPase which is composed of a catalytic alpha subunit, an auxiliary non-catalytic beta subunit and an additional regulatory subunit. As to expression, expressed in the distal convoluted tubule in the kidney. Found on basolateral membranes of nephron epithelial cells.

Its subcellular location is the membrane. Functionally, may be involved in forming the receptor site for cardiac glycoside binding or may modulate the transport function of the sodium ATPase. This chain is Sodium/potassium-transporting ATPase subunit gamma (FXYD2), found in Homo sapiens (Human).